A 717-amino-acid chain; its full sequence is Acetone carboxylase beta subunit (717 aa).

Heterohexamer of two alpha, two beta and two gamma subunits. Requires Fe cation as cofactor. The cofactor is Mg(2+). Zn(2+) is required as a cofactor. In terms of processing, the N-terminus is blocked.

It catalyses the reaction acetone + hydrogencarbonate + 2 ATP + 3 H2O = acetoacetate + 2 AMP + 4 phosphate + 4 H(+). In terms of biological role, catalyzes the carboxylation of acetone to form acetoacetate. Has a reduced activity on butanone, and no activity on 2-pentatone, 3-pentatone, 2-hexanone, chloroacetone, pyruvate, phosphoenolpyruvate, acetaldehyde, propionaldehyde and propylene oxide. This chain is Acetone carboxylase beta subunit, found in Xanthobacter autotrophicus (strain ATCC BAA-1158 / Py2).